Here is a 761-residue protein sequence, read N- to C-terminus: uncharacterized protein (761 aa).

Residues 1–84 (MIVKCPICDG…CGGSGKVVKC (84 aa)) form a CR-type zinc finger. One can recognise an S1 motif domain in the interval 135 to 200 (GKFYKGVVTR…EKREIDFKYI (66 aa)).

This is an uncharacterized protein from Methanocaldococcus jannaschii (strain ATCC 43067 / DSM 2661 / JAL-1 / JCM 10045 / NBRC 100440) (Methanococcus jannaschii).